The primary structure comprises 377 residues: Palmitoyltransferase PFA4 (377 aa).

Residues 1–9 (MAIKLKNRW) are Cytoplasmic-facing. Residues 10–30 (LGVAIPAFLVALIGYGSHYFI) form a helical membrane-spanning segment. The Lumenal segment spans residues 31–122 (LSNFLSWNEQ…NCVGHSNFPH (92 aa)). The DHHC domain occupies 78 to 128 (NYCKKCRVYKPERAHHCKTCNQCVLAMDHHCPWTLNCVGHSNFPHFMRFLF). Residue cysteine 108 is the S-palmitoyl cysteine intermediate of the active site. Residues 123–143 (FMRFLFWVIFSTAYLLFLLIG) form a helical membrane-spanning segment. The Cytoplasmic segment spans residues 144–163 (RIYLLWSIRHTAFHHRSTSE). The chain crosses the membrane as a helical span at residues 164-184 (IIFICIMTPMDAFVLLTVSSL). Over 185 to 377 (LGRCIYNQCL…SDFGVDTELE (193 aa)) the chain is Lumenal.

The protein belongs to the DHHC palmitoyltransferase family. PFA4 subfamily.

The protein resides in the endoplasmic reticulum membrane. The catalysed reaction is L-cysteinyl-[protein] + hexadecanoyl-CoA = S-hexadecanoyl-L-cysteinyl-[protein] + CoA. Its function is as follows. Mediates the reversible addition of palmitate to target proteins, thereby regulating their membrane association and biological function. The sequence is that of Palmitoyltransferase PFA4 from Kluyveromyces lactis (strain ATCC 8585 / CBS 2359 / DSM 70799 / NBRC 1267 / NRRL Y-1140 / WM37) (Yeast).